A 419-amino-acid polypeptide reads, in one-letter code: Serine hydroxymethyltransferase (419 aa).

Residues L121 and 125–127 (GHL) each bind (6S)-5,6,7,8-tetrahydrofolate. K230 carries the N6-(pyridoxal phosphate)lysine modification. 355–357 (SPF) lines the (6S)-5,6,7,8-tetrahydrofolate pocket.

The protein belongs to the SHMT family. In terms of assembly, homodimer. The cofactor is pyridoxal 5'-phosphate.

It is found in the cytoplasm. It carries out the reaction (6R)-5,10-methylene-5,6,7,8-tetrahydrofolate + glycine + H2O = (6S)-5,6,7,8-tetrahydrofolate + L-serine. The protein operates within one-carbon metabolism; tetrahydrofolate interconversion. It functions in the pathway amino-acid biosynthesis; glycine biosynthesis; glycine from L-serine: step 1/1. Functionally, catalyzes the reversible interconversion of serine and glycine with tetrahydrofolate (THF) serving as the one-carbon carrier. This reaction serves as the major source of one-carbon groups required for the biosynthesis of purines, thymidylate, methionine, and other important biomolecules. Also exhibits THF-independent aldolase activity toward beta-hydroxyamino acids, producing glycine and aldehydes, via a retro-aldol mechanism. This is Serine hydroxymethyltransferase from Streptococcus equi subsp. zooepidemicus (strain MGCS10565).